An 812-amino-acid chain; its full sequence is Endogenous retrovirus group K member 18 Pol protein (812 aa).

The Reverse transcriptase domain occupies 57 to 245 (LEKGHIEPSF…TPFHYLGMQI (189 aa)). The short motif at 161 to 164 (LPQG) is the LPQG element. The short motif at 195-198 (YFDD) is the YXDD element. Residues 460-590 (LENALTVFTD…ADLLVSSAFI (131 aa)) enclose the RNase H type-1 domain. Mg(2+)-binding residues include Asp469, Glu497, Asp517, and Asp582. The Integrase-type zinc finger occupies 587 to 628 (SAFIKAQELHALTHVNAAGLKNKFDVTWKQAKDIVQHCTQCQ). Positions 596, 600, 624, and 627 each coordinate Zn(2+). Residues 637-803 (AGVNPEVCVL…TSAEHLTGKK (167 aa)) form the Integrase catalytic domain.

Belongs to the beta type-B retroviral polymerase family. HERV class-II K(HML-2) pol subfamily.

The catalysed reaction is DNA(n) + a 2'-deoxyribonucleoside 5'-triphosphate = DNA(n+1) + diphosphate. It catalyses the reaction Endonucleolytic cleavage to 5'-phosphomonoester.. Functionally, early post-infection, the reverse transcriptase converts the viral RNA genome into double-stranded viral DNA. The RNase H domain of the reverse transcriptase performs two functions. It degrades the RNA template and specifically removes the RNA primer from the RNA/DNA hybrid. Following nuclear import, the integrase catalyzes the insertion of the linear, double-stranded viral DNA into the host cell chromosome. Endogenous Pol proteins may have kept, lost or modified their original function during evolution. This Homo sapiens (Human) protein is Endogenous retrovirus group K member 18 Pol protein (ERVK-18).